The following is a 151-amino-acid chain: Desiccation-related protein PCC27-45 (151 aa).

Belongs to the LEA type 2 family.

This is Desiccation-related protein PCC27-45 from Craterostigma plantagineum (Blue gem).